The sequence spans 247 residues: 2-amino-5-formylamino-6-ribosylaminopyrimidin-4(3H)-one 5'-monophosphate deformylase (247 aa).

Positions 41, 43, 52, and 121 each coordinate Fe cation.

It belongs to the creatininase superfamily. FAPy deformylase family. In terms of assembly, homodimer. The cofactor is Fe(2+). It depends on Zn(2+) as a cofactor.

The catalysed reaction is 2-amino-5-formylamino-6-(5-phospho-D-ribosylamino)pyrimidin-4(3H)-one + H2O = 2,5-diamino-6-(1-D-ribosylamino)pyrimidin-4(3H)-one 5'-phosphate + formate + H(+). The protein operates within cofactor biosynthesis; coenzyme F420 biosynthesis. It functions in the pathway cofactor biosynthesis; riboflavin biosynthesis. Catalyzes the hydrolysis of the formamide of 2-amino-5-formylamino-6-ribosylamino-4(3H)-pyrimidinone 5'-monophosphate (FAPy) to form 2,5-diamino-6-ribosylamino-4(3H)-pyrimidinone 5'-phosphate (APy). In Methanothermus fervidus (strain ATCC 43054 / DSM 2088 / JCM 10308 / V24 S), this protein is 2-amino-5-formylamino-6-ribosylaminopyrimidin-4(3H)-one 5'-monophosphate deformylase.